A 662-amino-acid chain; its full sequence is Biosynthetic arginine decarboxylase (662 aa).

Lys-126 is subject to N6-(pyridoxal phosphate)lysine. 308–318 (LNVGGGLGVDY) serves as a coordination point for substrate.

It belongs to the Orn/Lys/Arg decarboxylase class-II family. SpeA subfamily. It depends on Mg(2+) as a cofactor. Pyridoxal 5'-phosphate serves as cofactor.

The enzyme catalyses L-arginine + H(+) = agmatine + CO2. In terms of biological role, catalyzes the biosynthesis of agmatine from arginine. The polypeptide is Biosynthetic arginine decarboxylase (Deinococcus radiodurans (strain ATCC 13939 / DSM 20539 / JCM 16871 / CCUG 27074 / LMG 4051 / NBRC 15346 / NCIMB 9279 / VKM B-1422 / R1)).